A 226-amino-acid polypeptide reads, in one-letter code: Cytidylate kinase (226 aa).

Position 12–20 (12–20) interacts with ATP; it reads GPSGAGKGT.

It belongs to the cytidylate kinase family. Type 1 subfamily.

Its subcellular location is the cytoplasm. It carries out the reaction CMP + ATP = CDP + ADP. It catalyses the reaction dCMP + ATP = dCDP + ADP. This is Cytidylate kinase from Vibrio vulnificus (strain CMCP6).